The primary structure comprises 410 residues: Regulator of microtubule dynamics protein 2 (410 aa).

The chain crosses the membrane as a helical span at residues 9-28; it reads LILGIMVGTAGISLLLLWYH. A Phosphoserine modification is found at S51. Residues 68-110 are a coiled coil; that stretch reads FQERQLQILEKLNELLTNMEELKEEIRFLKEAIPKLEEYIQDE. S121 is modified (phosphoserine). The span at 122-131 shows a compositional bias: basic residues; sequence PQHRARKRRL. Residues 122–164 are disordered; sequence PQHRARKRRLPTIQSSATSNSSEEAESEGGYITANTDTEEQSF. T139 is modified (phosphothreonine). Phosphotyrosine is present on Y152. 2 positions are modified to phosphothreonine: T154 and T157.

It belongs to the RMDN family. As to quaternary structure, interacts with microtubules.

The protein resides in the membrane. It localises to the cytoplasm. The protein localises to the cytoskeleton. It is found in the spindle. Its subcellular location is the spindle pole. The chain is Regulator of microtubule dynamics protein 2 (RMDN2) from Homo sapiens (Human).